The following is a 327-amino-acid chain: Mitochondrial carnitine carrier (327 aa).

The segment covering 1-11 has biased composition (low complexity); the sequence is MSSDTSLSESS. Residues 1-29 are disordered; that stretch reads MSSDTSLSESSLLKEESGSLTKSRPPIKS. The next 6 membrane-spanning stretches (helical) occupy residues 33–49, 107–123, 141–162, 196–212, 244–260, and 293–313; these read RENI…GVCA, LGVT…YDVG, MGQM…TAPT, GSLA…ALYF, LAGG…VFPI, and FFPG…ATFL. 3 Solcar repeats span residues 33–126, 139–221, and 237–321; these read RENI…GKKL, LTMG…SKNY, and VNIL…THSL.

Belongs to the mitochondrial carrier (TC 2.A.29) family.

Its subcellular location is the mitochondrion inner membrane. Functionally, transports carnitine, acetylcarnitine, propionylcarnitine and to a much lower extent medium- and long-chain acylcarnitines. The protein is Mitochondrial carnitine carrier (CRC1) of Saccharomyces cerevisiae (strain ATCC 204508 / S288c) (Baker's yeast).